Consider the following 42-residue polypeptide: Aspartate-semialdehyde dehydrogenase leader peptide (42 aa).

This chain is Aspartate-semialdehyde dehydrogenase leader peptide, found in Streptococcus mutans serotype c (strain ATCC 700610 / UA159).